A 347-amino-acid polypeptide reads, in one-letter code: D-alanine--D-alanine ligase (347 aa).

Residues 131–333 (KRVLESAGIA…YPELIERLVD (203 aa)) enclose the ATP-grasp domain. ATP is bound at residue 161-216 (EEKLAYPVFTKPSNMGSSVGISKSENQEELRQALKLAFRYDSRVLVEQGVNAREIE). Positions 287, 300, and 302 each coordinate Mg(2+).

Belongs to the D-alanine--D-alanine ligase family. It depends on Mg(2+) as a cofactor. Requires Mn(2+) as cofactor.

The protein localises to the cytoplasm. It catalyses the reaction 2 D-alanine + ATP = D-alanyl-D-alanine + ADP + phosphate + H(+). The protein operates within cell wall biogenesis; peptidoglycan biosynthesis. In terms of biological role, cell wall formation. This chain is D-alanine--D-alanine ligase, found in Streptococcus pneumoniae serotype 19F (strain G54).